Reading from the N-terminus, the 217-residue chain is Dephospho-CoA kinase (217 aa).

In terms of domain architecture, DPCK spans 4-203; it reads IVALTGGISS…SHLSRIYNKN (200 aa). 12-17 contacts ATP; sequence SSGKTT.

This sequence belongs to the CoaE family.

It localises to the cytoplasm. It catalyses the reaction 3'-dephospho-CoA + ATP = ADP + CoA + H(+). It functions in the pathway cofactor biosynthesis; coenzyme A biosynthesis; CoA from (R)-pantothenate: step 5/5. Catalyzes the phosphorylation of the 3'-hydroxyl group of dephosphocoenzyme A to form coenzyme A. The sequence is that of Dephospho-CoA kinase from Buchnera aphidicola subsp. Acyrthosiphon pisum (strain APS) (Acyrthosiphon pisum symbiotic bacterium).